The following is a 325-amino-acid chain: Methionyl-tRNA formyltransferase (325 aa).

Residue 113–116 (SLLP) coordinates (6S)-5,6,7,8-tetrahydrofolate.

This sequence belongs to the Fmt family.

It catalyses the reaction L-methionyl-tRNA(fMet) + (6R)-10-formyltetrahydrofolate = N-formyl-L-methionyl-tRNA(fMet) + (6S)-5,6,7,8-tetrahydrofolate + H(+). Its function is as follows. Attaches a formyl group to the free amino group of methionyl-tRNA(fMet). The formyl group appears to play a dual role in the initiator identity of N-formylmethionyl-tRNA by promoting its recognition by IF2 and preventing the misappropriation of this tRNA by the elongation apparatus. This is Methionyl-tRNA formyltransferase from Chromohalobacter salexigens (strain ATCC BAA-138 / DSM 3043 / CIP 106854 / NCIMB 13768 / 1H11).